Reading from the N-terminus, the 199-residue chain is Small ribosomal subunit protein uS14m (199 aa).

The tract at residues 28–67 is disordered; sequence LSTPAPEPAKPSSEETTESTEPATSVEDAGEPMKEKRITQ.

This sequence belongs to the universal ribosomal protein uS14 family. In terms of assembly, component of the mitochondrial ribosome small subunit (28S) which comprises a 12S rRNA and about 30 distinct proteins. Interacts with LIAT1.

The protein resides in the mitochondrion. This is Small ribosomal subunit protein uS14m (mrps-14) from Caenorhabditis elegans.